The sequence spans 259 residues: Haloacid dehalogenase-like hydrolase domain-containing protein 2 (259 aa).

Asp-13 and Ser-15 together coordinate Mg(2+). Residues 13–15 (DLS) and 46–47 (TN) contribute to the substrate site. The stretch at 47–71 (NTTKESKQDLLERLRKLEFDISEDE) forms a coiled coil. The residue at position 50 (Lys-50) is an N6-succinyllysine. A substrate-binding site is contributed by Lys-179. Asp-204 is a binding site for Mg(2+).

This sequence belongs to the HAD-like hydrolase superfamily. Mg(2+) serves as cofactor.

This Homo sapiens (Human) protein is Haloacid dehalogenase-like hydrolase domain-containing protein 2 (HDHD2).